A 192-amino-acid chain; its full sequence is Leucine-rich repeat-containing protein 51 (192 aa).

LRR repeat units lie at residues 49-71 (SLTQ…NQVV), 80-101 (NLAW…LTTF), and 103-124 (NLSV…NKLA). The LRRCT domain occupies 137–175 (NPIEEEKGYRQYVLCNLPRITTFDFSGVTRADRSTAEVW).

In terms of tissue distribution, widely expressed in adult and embryonic tissues. Expressed in the developing choroid plexus from 12.5 dpc and in the epithelium of the developing airway tract from 14.5 dpc. Also expressed in the postnatal inner ear.

It is found in the cytoplasm. This chain is Leucine-rich repeat-containing protein 51, found in Mus musculus (Mouse).